We begin with the raw amino-acid sequence, 627 residues long: Monoterpene synthase like 1, chloroplastic (627 aa).

The transit peptide at Met1–Ala50 directs the protein to the chloroplast. The Mg(2+) site is built by Asp378, Asp382, and Asp530. Positions Asp378–Asp382 match the DDXXD motif motif.

This sequence belongs to the terpene synthase family. Tpsd subfamily. Requires Mg(2+) as cofactor. Mn(2+) is required as a cofactor.

It localises to the plastid. The protein resides in the chloroplast. It participates in terpene metabolism; oleoresin biosynthesis. Its pathway is secondary metabolite biosynthesis; terpenoid biosynthesis. In terms of biological role, monoterpene synthase (TPS) involved in the biosynthesis of monoterpene natural products included in conifer oleoresin secretions and volatile emissions; these compounds contribute to biotic and abiotic stress defense against herbivores and pathogens. The protein is Monoterpene synthase like 1, chloroplastic of Pinus contorta (Shore pine).